Consider the following 523-residue polypeptide: NEDD8-activating enzyme E1 regulatory subunit AXL (523 aa).

It belongs to the ubiquitin-activating E1 family. ULA1 subfamily. Heterodimer of ECR1 and AXL1. The complex binds to RUB1/NEDD8 and RCE1.

It is found in the nucleus. It functions in the pathway protein modification; protein neddylation. In terms of biological role, regulatory subunit of the dimeric ECR1-AXL1 E1 enzyme. E1 activates RUB1/NEDD8 by first adenylating its C-terminal glycine residue with ATP, thereafter linking this residue to the side chain of the catalytic cysteine, yielding a RUB1-ECR1 thioester and free AMP. E1 finally transfers RUB1 to the catalytic cysteine of RCE1. May function redundantly with AXR1 in the RUB conjugating pathway. Seems not to be functionally equivalent to AXR1 in vivo. This chain is NEDD8-activating enzyme E1 regulatory subunit AXL, found in Arabidopsis thaliana (Mouse-ear cress).